A 703-amino-acid chain; its full sequence is Fanconi-associated nuclease 1 homolog (703 aa).

4 residues coordinate Mn(2+): Glu529, Asp651, Glu666, and Val667. One can recognise a VRR-NUC domain in the interval 597-698; sequence YIREHQRKTF…EVDVEVCHVS (102 aa).

Belongs to the FAN1 family. Mn(2+) is required as a cofactor. Mg(2+) serves as cofactor.

The protein localises to the nucleus. It catalyses the reaction Hydrolytically removes 5'-nucleotides successively from the 3'-hydroxy termini of 3'-hydroxy-terminated oligonucleotides.. Its function is as follows. Nuclease required for the repair of DNA interstrand cross-links (ICL). Acts as a 5'-3' exonuclease that anchors at a cut end of DNA and cleaves DNA successively at every third nucleotide, allowing to excise an ICL from one strand through flanking incisions. The chain is Fanconi-associated nuclease 1 homolog from Schizosaccharomyces pombe (strain 972 / ATCC 24843) (Fission yeast).